Consider the following 227-residue polypeptide: TMF-regulated nuclear protein 1 (227 aa).

Disordered stretches follow at residues 1-72 and 200-227; these read MPGC…ELQR and GRLR…SPQR. A compositionally biased stretch (pro residues) spans 22-55; that stretch reads SPPPPWDPMPSSQPPPPTPTLTPTPTPGQSPPLP.

Interacts with TMF1; may regulate TRNP1 proteasomal degradation. Ubiquitinated, leading to its degradation by the proteasome.

Its subcellular location is the nucleus. Functionally, DNA-binding factor that regulates the expression of a subset of genes and plays a key role in tangential, radial, and lateral expansion of the brain neocortex. Regulates neural stem cells proliferation and the production of intermediate neural progenitors and basal radial glial cells affecting the process of cerebral cortex gyrification. May control the proliferation rate of cells by regulating their progression through key cell-cycle transition points. This is TMF-regulated nuclear protein 1 (TRNP1) from Homo sapiens (Human).